Reading from the N-terminus, the 482-residue chain is MKFIIKLFPEITIKSQSVRLRFIKILTGNIRNVLKHYDETLAVVRHWDNIEVRAKDENQRLAIRDALTRIPGIHHILEVEDVPFTDMHDIFEKALVQYRDQLEGKTFCVRVKRRGKHDFSSIDVERYVGGGLNQHIESARVKLTNPEVTVHLEVEDDRLLLIKGRYEGIGGFPIGTQEDVLSLISGGFDSGVSSYMLMRRGCRVHYCFFNLGGAAHEIGVRQVAHYLWNRFGSSHRVRFVAINFEPVVGEILEKIDDGQMGVILKRMMVRAASKVAERYGVQALVTGEALGQVSSQTLTNLRLIDNVSDTLILRPLISYDKEHIINLARQIGTEDFARTMPEYCGVISKSPTVKAVKSKIEAEEEKFDFSILDKVVEEANNVDIREIALQTEQEVVEVETVNGFGPNDVILDIRSIDEQEDKPLKVEGIDVVSLPFYKLSTKFGDLDQNRTWLLWCERGVMSRLQALYLREQGFNNVKVYRP.

The THUMP domain maps to 61–165; that stretch reads LAIRDALTRI…DDRLLLIKGR (105 aa). Residues 183–184, Lys-265, Gly-287, and Gln-296 each bind ATP; that span reads LI. A disulfide bridge connects residues Cys-344 and Cys-456. In terms of domain architecture, Rhodanese spans 404–482; sequence FGPNDVILDI…GFNNVKVYRP (79 aa). Catalysis depends on Cys-456, which acts as the Cysteine persulfide intermediate.

The protein belongs to the ThiI family.

The protein resides in the cytoplasm. The enzyme catalyses [ThiI sulfur-carrier protein]-S-sulfanyl-L-cysteine + a uridine in tRNA + 2 reduced [2Fe-2S]-[ferredoxin] + ATP + H(+) = [ThiI sulfur-carrier protein]-L-cysteine + a 4-thiouridine in tRNA + 2 oxidized [2Fe-2S]-[ferredoxin] + AMP + diphosphate. It carries out the reaction [ThiS sulfur-carrier protein]-C-terminal Gly-Gly-AMP + S-sulfanyl-L-cysteinyl-[cysteine desulfurase] + AH2 = [ThiS sulfur-carrier protein]-C-terminal-Gly-aminoethanethioate + L-cysteinyl-[cysteine desulfurase] + A + AMP + 2 H(+). It functions in the pathway cofactor biosynthesis; thiamine diphosphate biosynthesis. In terms of biological role, catalyzes the ATP-dependent transfer of a sulfur to tRNA to produce 4-thiouridine in position 8 of tRNAs, which functions as a near-UV photosensor. Also catalyzes the transfer of sulfur to the sulfur carrier protein ThiS, forming ThiS-thiocarboxylate. This is a step in the synthesis of thiazole, in the thiamine biosynthesis pathway. The sulfur is donated as persulfide by IscS. The protein is tRNA sulfurtransferase of Shigella boydii serotype 4 (strain Sb227).